The sequence spans 446 residues: Tripartite motif-containing protein 43B (446 aa).

The RING-type zinc-finger motif lies at 15–56 (CVICLNYLVDPVTICCGHSFCRPCLCLSWEEAQSPANCPACR). The B box-type zinc-finger motif lies at 88 to 129 (SEKQICGTHRQTKKMFCDMDKSLLCLLCSNSQEHGAHKHYPI). Zn(2+) is bound by residues cysteine 93, histidine 96, cysteine 115, and histidine 121. Coiled-coil stretches lie at residues 129 to 158 (IEEAAEEDREKLLKQMRILWKKIQENQRNL) and 190 to 220 (LHKEEKQHLERLNKEYQEIFQQLQRSWVKMD). Residues 269 to 446 (ELTAGPITGL…VRPFFYTGHR (178 aa)) enclose the B30.2/SPRY domain.

The protein belongs to the TRIM/RBCC family.

This is Tripartite motif-containing protein 43B (TRIM43B) from Homo sapiens (Human).